We begin with the raw amino-acid sequence, 869 residues long: Facilitated trehalose transporter Tret1 (869 aa).

Disordered stretches follow at residues 1 to 214 (MSGR…QKAT) and 258 to 315 (KESS…LIHR). At 1 to 404 (MSGRDNRGAG…VYRPTTNPIY (404 aa)) the chain is on the cytoplasmic side. The span at 25 to 43 (KLKEKLTRAGDDQGYHRVE) shows a compositional bias: basic and acidic residues. Composition is skewed to low complexity over residues 44–57 (SNLSTSNTATSLDT), 79–92 (PQQQQQQQQRQQLR), and 118–127 (PFQQQQQRTP). 2 stretches are compositionally biased toward basic and acidic residues: residues 147-156 (EIREHRDRQQ) and 258-291 (KESSSEEEFHKTRREFQGRKHQSLDPRVTFKLDK). Phosphoserine is present on residues serine 260, serine 261, serine 262, serine 332, and serine 334. Positions 336–368 (EDFHTSRQHFQQQRSISTDSRKSRRPYEMDEMG) are disordered. Polar residues predominate over residues 343–353 (QHFQQQRSIST). Residues 354-368 (DSRKSRRPYEMDEMG) are compositionally biased toward basic and acidic residues. Residues 405–425 (IWTQVLAALSVSLGSLVVGFV) form a helical membrane-spanning segment. Topologically, residues 426–452 (SAYTSPALVSMTNRNMTSFEVTPQAAS) are extracellular. N-linked (GlcNAc...) asparagine glycosylation is present at asparagine 440. A helical membrane pass occupies residues 453–473 (WVGGIMPLAGLAGGIAGGPFI). Over 474 to 485 (EYLGRRNTILAT) the chain is Cytoplasmic. Residues 486–506 (AIPFIVSSLLIACAVNVAMVL) traverse the membrane as a helical segment. Residues 507-509 (AGR) lie on the Extracellular side of the membrane. Residues 510-530 (FLAGFCVGIASLSLPVYLGET) traverse the membrane as a helical segment. Residues 531–536 (VQPEVR) are Cytoplasmic-facing. Residues 537–557 (GTLGLLPTAFGNIGILLCFVA) traverse the membrane as a helical segment. Residues 558-564 (GTYMDWS) are Extracellular-facing. Residues 565–585 (MLAFLGAALPVPFLILMFLIP) form a helical membrane-spanning segment. The Cytoplasmic portion of the chain corresponds to 586 to 654 (ETPRWFVSRG…NLKPLSISLG (69 aa)). A helical membrane pass occupies residues 655-675 (LMFFQQLSGINAVIFYTVSIF). Over 676–685 (KDAGSTIDGN) the chain is Extracellular. A helical transmembrane segment spans residues 686-706 (LCTIIVGIVNFMATFIATLLI). At 707–712 (DRAGRK) the chain is on the cytoplasmic side. Residues 713-733 (ILLYVSNIAMIITLFVLGGFF) form a helical membrane-spanning segment. Residues 734–752 (YCKSHGQDVSQLGWLPLSC) are Extracellular-facing. The helical transmembrane segment at 753–773 (FVIYILGFSLGFGPIPWLMMG) threads the bilayer. Over 774 to 779 (EILPSK) the chain is Cytoplasmic. Residues 780–800 (IRGSAASVATAFNWSCTFVVT) form a helical membrane-spanning segment. Residues 801–813 (KTFQDMIDFMGAH) are Extracellular-facing. A helical membrane pass occupies residues 814–834 (GAFWLFGSICFIGLFFVILYV). The Cytoplasmic portion of the chain corresponds to 835–869 (PETQGKTLEDIERKMMGRVRRMSSVANMKPLAFNM). Serine 857 and serine 858 each carry phosphoserine.

The protein belongs to the major facilitator superfamily. Sugar transporter (TC 2.A.1.1) family. Trehalose transporter subfamily.

The protein localises to the cell membrane. Functionally, low-capacity facilitative transporter for trehalose. Does not transport maltose, sucrose or lactose. Mediates the bidirectional transfer of trehalose. Responsible for the transport of trehalose synthesized in the fat body and the incorporation of trehalose into other tissues that require a carbon source, thereby regulating trehalose levels in the hemolymph. This is Facilitated trehalose transporter Tret1 from Drosophila persimilis (Fruit fly).